The following is a 511-amino-acid chain: Glutamate/gamma-aminobutyrate antiporter (511 aa).

Over methionine 1–threonine 14 the chain is Cytoplasmic. A helical transmembrane segment spans residues leucine 15 to phenylalanine 35. Over alanine 36 to serine 41 the chain is Periplasmic. A helical transmembrane segment spans residues leucine 42–alanine 62. Residues glutamate 63–serine 93 lie on the Cytoplasmic side of the membrane. Residues phenylalanine 94–leucine 114 traverse the membrane as a helical segment. Residues serine 115–proline 127 lie on the Periplasmic side of the membrane. A helical transmembrane segment spans residues isoleucine 128–glycine 148. Topologically, residues threonine 149–lysine 157 are cytoplasmic. The helical transmembrane segment at valine 158–tyrosine 178 threads the bilayer. Topologically, residues leucine 179–lysine 200 are periplasmic. Residues valine 201–alanine 221 form a helical membrane-spanning segment. Residues threonine 222–leucine 239 lie on the Cytoplasmic side of the membrane. Residues leucine 240–isoleucine 260 form a helical membrane-spanning segment. Topologically, residues proline 261–arginine 291 are periplasmic. Residues valine 292 to proline 312 form a helical membrane-spanning segment. Topologically, residues serine 313–asparagine 335 are cytoplasmic. A helical transmembrane segment spans residues glycine 336 to leucine 356. Topologically, residues threonine 357–serine 366 are periplasmic. Residues phenylalanine 367–isoleucine 387 traverse the membrane as a helical segment. At glycine 388–lysine 412 the chain is on the cytoplasmic side. A helical transmembrane segment spans residues leucine 413–proline 433. The Periplasmic portion of the chain corresponds to proline 434–tyrosine 445. The helical transmembrane segment at valine 446 to valine 466 threads the bilayer. The Cytoplasmic portion of the chain corresponds to histidine 467–histidine 511.

This sequence belongs to the amino acid-polyamine-organocation (APC) superfamily. Glutamate:GABA antiporter (GGA) (TC 2.A.3.7) family.

It localises to the cell inner membrane. It catalyses the reaction 4-aminobutanoate(in) + L-glutamate(out) = 4-aminobutanoate(out) + L-glutamate(in). Shows pH-dependent activity. The glutamate analog L-trans-pyrrolidine-2,4-dicarboxylic acid (L-PDC) blocks the uptake of glutamate by selective inhibition. In terms of biological role, involved in glutaminase-dependent acid resistance. Exchanges extracellular glutamate (Glu) for intracellular gamma-aminobutyric acid (GABA) under acidic conditions. The ability to survive the extremely acidic conditions of the stomach is essential for successful colonization of the host by commensal and pathogenic bacteria. This is Glutamate/gamma-aminobutyrate antiporter (gadC) from Escherichia coli O157:H7.